The chain runs to 202 residues: MTTHFTKEAFDTFEIEGLEQRMDAIRERIQPVFKQIGQEVSPDLTVNLAEDMYVHIAQHARRKVNPPKDTWMAFSPNKRGYKKHPHFQVGLFDDHLFIWLAYIYELPNKSQYATKLLNHQELLHALPSDFVVSYDHMKKEAQQIDETGLEQGLVRFRDVKKAEFLVGRHVSAEEVSAMSHEDLVKLIRNTYEQLVPIYKKIQ.

This sequence belongs to the UPF0637 family.

This chain is UPF0637 protein Exig_2520, found in Exiguobacterium sibiricum (strain DSM 17290 / CCUG 55495 / CIP 109462 / JCM 13490 / 255-15).